The sequence spans 95 residues: Small ribosomal subunit protein bS6 (95 aa).

The protein belongs to the bacterial ribosomal protein bS6 family.

In terms of biological role, binds together with bS18 to 16S ribosomal RNA. The polypeptide is Small ribosomal subunit protein bS6 (Acholeplasma laidlawii (strain PG-8A)).